The following is a 290-amino-acid chain: MSLFEAQPRPTKIYHSETYDRIAKHHGFNGQGKVVLITGGASGVGFSIAKAFAAAGVVCIAIVSRSASPQEQAKAALEAAYPSVRVVLFQASVTDSVRMPEILHELGPVDVLVLGVAVVHRREKATAITEQELRDAFDTNVIAAFNLTKAYLETPLPASGQKTIINISSAAAQVHTTRRVGYGSSKAAAAQVLQHFAVEQEQEPDGNPVRIFSFHPGAFYTPAVAQHFTKDEHKWDDLALPGDFAVWLAGPESSFLHGRHLWANWDVDELIGLRERVLQDRRFLTIGLVV.

NADP(+) contacts are provided by Ile-37 and Lys-149. Catalysis depends on proton donor residues Ser-168 and Tyr-182. Residues Tyr-182, Lys-186, and Thr-221 each coordinate NADP(+). Lys-186 (lowers pKa of active site Tyr) is an active-site residue.

This sequence belongs to the short-chain dehydrogenases/reductases (SDR) family.

The protein operates within secondary metabolite biosynthesis. Short chain dehydrogenase/reductase; part of the gene cluster that mediates the biosynthesis of the tetrahydroxanthone dimer neosartorin, which exhibits antibacterial activity. The two different monomeric units appear to be synthesized by the same set of enzymes, among which the Baeyer-Villiger monooxygenase nsrF is the key enzyme for the divergence of the biosynthetic routes. The pathway begins with the synthesis of atrochrysone thioester by the polyketide synthase nsrB. The atrochrysone carboxyl ACP thioesterase nsrC then breaks the thioester bond and releases the atrochrysone carboxylic acid from AacuL. Atrochrysone carboxylic acid is decarboxylated by the decarboxylase nsrE, and oxidized by the anthrone oxygenase nsrD to yield emodin. Emodin is then reduced to emodin hydroquinone by the oxidoreductase nsrR. A-ring reduction by the short chain dehydrogenase nsrJ, dehydration by the scytalone dehydratase-like protein nsrI and probable spontaneous re-oxidation, results in overall deoxygenation to chrysophanol. The Baeyer-Villiger monooxygenase nsrF accepts chrysophanol as a substrate to insert one oxygen atom at two different positions to yield the precursors of both monomric units. NsrF is promiscuous/flexible in interacting with the 2 (non methylated and methylated) aromatic rings of chrysophanol, thus diverging the biosynthetic pathway at this point. After the hydrolysis of the lactones, methylesterification by the methyltransferase nsrG yields respectively moniliphenone and 2,2',6'-trihydroxy-4-methyl-6-methoxya-cyldiphenylmethanone. The next steps are the hydroxylation by the FAD-dependent monooxygenase nsrK, followed by isomerization by the monooxygenase nsrQ. The short chain dehydrogenase/reductase nsrO then catalyzes the C-5 ketoreduction to give the xanthone skeleton of blennolide C and 5-acetylblennolide A. The acetyltransferase nsrL has a strict substrate specificity and uses only blennolide A but not blennolide C to yield 5-acetylblennolide A as the single-acetylated product. In the final step of the biosynthesis, the heterodimerization of the 2 xanthones, blennolide C and 5-acetylblennolide A, is catalyzed by the cytochrome P450 monooxygenase nsrP. NsrP can utilize at least three different xanthones as its substrates to perform the dimerization reaction. The protein is Short chain dehydrogenase/reductase nsrO of Aspergillus novofumigatus (strain IBT 16806).